The chain runs to 138 residues: Secreted RxLR effector protein 51 (138 aa).

The signal sequence occupies residues 1–19; the sequence is MRSSTILFVLGVAMVAVNG. Positions 38–53 match the RxLR-dEER motif; it reads RLLRSNSGKHKTDEER. The N-linked (GlcNAc...) asparagine glycan is linked to N101.

Belongs to the RxLR effector family.

The protein resides in the secreted. The protein localises to the host nucleus. Its function is as follows. Secreted effector that completely suppresses the host cell death induced by cell death-inducing proteins. The protein is Secreted RxLR effector protein 51 of Plasmopara viticola (Downy mildew of grapevine).